The following is a 269-amino-acid chain: Proline-rich protein 7 (269 aa).

Topologically, residues 1–9 are extracellular; that stretch reads MVMSQGTYT. A required for interaction with NMDA receptors region spans residues 1–44; the sequence is MVMSQGTYTFLTCFAGFWLIWGLIVLLCCFCSFLRRRLKRRQEE. The tract at residues 2–39 is required for membrane localization; it reads VMSQGTYTFLTCFAGFWLIWGLIVLLCCFCSFLRRRLK. Residues 10–30 form a helical; Signal-anchor for type III membrane protein membrane-spanning segment; it reads FLTCFAGFWLIWGLIVLLCCF. Topologically, residues 31 to 269 are cytoplasmic; that stretch reads CSFLRRRLKR…IPLFGRTTAV (239 aa). S64 bears the Phosphoserine mark. 2 disordered regions span residues 64–83 and 98–128; these read SLAGSPPGLAPPPPPHRSRL and LLHHGPAQPHAHPHPHHHALPHPPPSHLSVP. Residues 108-117 show a composition bias toward basic residues; the sequence is AHPHPHHHAL. Pro residues predominate over residues 118–128; it reads PHPPPSHLSVP. The tract at residues 146-166 is required for internalization; it reads PCYEEAVLMAEPPPPYSEVLT. The interval 146–269 is required for apoptosis induction; sequence PCYEEAVLMA…IPLFGRTTAV (124 aa). The short motif at 267–269 is the PDZ-binding element; that stretch reads TAV.

As to quaternary structure, forms a complex with NMDA receptor zeta subunit GRIN1 and epsilon subunit GRIN2B. Interacts with GRIN2B. Interacts with GRIN1; the interaction is reduced upon NMDA receptor activity. Found in a postsynaptic membrane complex with DLG4 and GRIN1. Interacts with DLG4 (via PDZ3 domain and to lesser degree via PDZ2 domain). Interacts with FBXW7. Found in a complex with JUN and FBXW7. Interacts with JUN and FBXW7; the interaction inhibits ubiquitination-mediated JUN degradation promoting its phosphorylation and transcriptional activity. Interacts with SRC. Post-translationally, palmitoylated. In terms of processing, tyrosine phosphorylated, possibly by SRC. As to expression, expressed in brain. Expressed in the cerebral cortex and especially in hippocampal neural cells (at protein level).

It localises to the cell membrane. It is found in the postsynaptic cell membrane. The protein localises to the postsynaptic density membrane. The protein resides in the cytoplasm. Its subcellular location is the perinuclear region. It localises to the synapse. It is found in the cell projection. The protein localises to the dendrite. The protein resides in the nucleus. Its function is as follows. Acts as a synapse-to-nucleus messenger to promote NMDA receptor-mediated excitotoxicity in neurons in a JUN-dependent manner. Inhibits ubiquitination-mediated degradation and promotes phosphorylation and transcriptional activity of transcription factor JUN. Might play a redundant role in the regulation of T cell receptor signaling. Might promote apoptosis in T cells. This chain is Proline-rich protein 7 (Prr7), found in Rattus norvegicus (Rat).